The chain runs to 123 residues: Ferredoxin-5 (123 aa).

Positions 2-119 (PNITFTSPIM…DVMVHFTGTP (118 aa)) constitute a 2Fe-2S ferredoxin-type domain. [2Fe-2S] cluster-binding residues include C42, C47, C50, and C102.

This sequence belongs to the 2Fe2S plant-type ferredoxin family. It depends on [2Fe-2S] cluster as a cofactor.

Its function is as follows. Ferredoxins are iron-sulfur proteins that transfer electrons in a wide variety of metabolic reactions. This ferredoxin probably participates in nitrogen fixation. The sequence is that of Ferredoxin-5 (fdxD) from Rhodobacter capsulatus (Rhodopseudomonas capsulata).